The primary structure comprises 420 residues: 3-oxo-tetronate kinase (420 aa).

ATP is bound by residues serine 258, 360–363 (GGET), and glycine 403.

Belongs to the four-carbon acid sugar kinase family.

It carries out the reaction 3-dehydro-L-erythronate + ATP = 3-dehydro-4-O-phospho-L-erythronate + ADP + H(+). The catalysed reaction is 3-dehydro-D-erythronate + ATP = 3-dehydro-4-O-phospho-D-erythronate + ADP + H(+). Catalyzes the ATP-dependent phosphorylation of 3-oxo-tetronate to 3-oxo-tetronate 4-phosphate. This is 3-oxo-tetronate kinase from Salmonella typhimurium (strain LT2 / SGSC1412 / ATCC 700720).